The chain runs to 591 residues: Reduced folate transporter (591 aa).

Met1 carries the N-acetylmethionine modification. The Cytoplasmic segment spans residues 1–29; the sequence is MVPSSPAVEKQVPVEPGPDPELRSWRHLV. Phosphoserine is present on Ser5. Residues 30–50 form a helical membrane-spanning segment; the sequence is CYLCFYGFMAQIRPGESFITP. The folate site is built by Ile48 and Thr49. Topologically, residues 51–64 are extracellular; that stretch reads YLLGPDKNFTREQV. A glycan (N-linked (GlcNAc...) asparagine) is linked at Asn58. The helical transmembrane segment at 65–87 threads the bilayer; the sequence is TNEITPVLSYSYLAVLVPVFLLT. The Cytoplasmic segment spans residues 88-91; that stretch reads DYLR. Residues 92 to 112 form a helical membrane-spanning segment; the sequence is YTPVLLLQGLSFVSVWLLLLL. Residues 113 to 116 lie on the Extracellular side of the membrane; it reads GHSV. The chain crosses the membrane as a helical span at residues 117–139; sequence AHMQLMELFYSVTMAARIAYSSY. Folate is bound by residues Glu123 and Arg133. Residues Arg133, Ile134, Ser137, Tyr149, and Arg157 each coordinate 2',3'-cGAMP. The Cytoplasmic portion of the chain corresponds to 140 to 153; that stretch reads IFSLVRPARYQRVA. Residues 154–178 traverse the membrane as a helical segment; that stretch reads GYSRAAVLLGVFTSSVLGQLLVTVG. Val164 contacts folate. Over 179–183 the chain is Extracellular; that stretch reads RVSFS. A helical transmembrane segment spans residues 184–202; the sequence is TLNYISLAFLTFSVVLALF. Topologically, residues 203–266 are cytoplasmic; that stretch reads LKRPKRSLFF…ELGDSLRRPQ (64 aa). At Ser225 the chain carries Phosphoserine. Residues 267-292 form a helical membrane-spanning segment; sequence LRLWSLWWVFNSAGYYLVVYYVHILW. 3 residues coordinate folate: Tyr281, Tyr282, and Tyr286. Tyr282 contacts 2',3'-cGAMP. Residues 293 to 304 are Extracellular-facing; that stretch reads NEVDPTTNSARV. A helical transmembrane segment spans residues 305-327; sequence YNGAADAASTLLGAITSFAAGFV. Ser321 lines the 2',3'-cGAMP pocket. Over 328–333 the chain is Cytoplasmic; it reads KIRWAR. A helical membrane pass occupies residues 334-354; sequence WSKLLIAGVTATQAGLVFLLA. The Extracellular segment spans residues 355–360; that stretch reads HTRHPS. The helical transmembrane segment at 361-384 threads the bilayer; that stretch reads SIWLCYAAFVLFRGSYQFLVPIAT. Folate is bound by residues Arg373 and Gln377. 6 residues coordinate 2',3'-cGAMP: Gln377, Pro381, Thr384, Lys393, Cys396, and Phe400. The Cytoplasmic portion of the chain corresponds to 385–398; sequence FQIASSLSKELCAL. A helical transmembrane segment spans residues 399–422; sequence VFGVNTFFATIVKTIITFIVSDVR. Residues 407–419 are required for substrate-binding; sequence ATIVKTIITFIVS. Over 423–430 the chain is Extracellular; that stretch reads GLGLPVRK. A helical membrane pass occupies residues 431-455; that stretch reads QFQLYSVYFLILSIIYFLGAMLDGL. Topologically, residues 456–591 are cytoplasmic; sequence RHCQRGHHPR…PSDGVQNVNQ (136 aa). A phosphoserine mark is found at Ser474, Ser485, Ser499, and Ser503.

It belongs to the reduced folate carrier (RFC) transporter (TC 2.A.48) family. As to expression, placenta, liver, and to a much smaller extent, in lung.

Its subcellular location is the cell membrane. The protein localises to the apical cell membrane. It is found in the basolateral cell membrane. The catalysed reaction is 5-amino-1-(5-phospho-beta-D-ribosyl)imidazole-4-carboxamide(in) + (6S)-5-methyl-5,6,7,8-tetrahydrofolate(out) = 5-amino-1-(5-phospho-beta-D-ribosyl)imidazole-4-carboxamide(out) + (6S)-5-methyl-5,6,7,8-tetrahydrofolate(in). It carries out the reaction 2',3'-cGAMP(out) + 5-amino-1-(5-phospho-beta-D-ribosyl)imidazole-4-carboxamide(in) = 2',3'-cGAMP(in) + 5-amino-1-(5-phospho-beta-D-ribosyl)imidazole-4-carboxamide(out). It catalyses the reaction 3',3'-cGAMP(out) + 5-amino-1-(5-phospho-beta-D-ribosyl)imidazole-4-carboxamide(in) = 3',3'-cGAMP(in) + 5-amino-1-(5-phospho-beta-D-ribosyl)imidazole-4-carboxamide(out). Antiporter that mediates the import of reduced folates or a subset of cyclic dinucleotides, driven by the export of organic anions. Acts as an importer of immunoreactive cyclic dinucleotides, such as cyclic GMP-AMP (2'-3'-cGAMP), an immune messenger produced in response to DNA virus in the cytosol, and its linkage isomer 3'-3'-cGAMP, thus playing a role in triggering larger immune responses. Mechanistically, acts as a secondary active transporter, which exports intracellular organic anions down their concentration gradients to facilitate the uptake of its substrates. Has high affinity for N5-methyltetrahydrofolate, the predominant circulating form of folate. Also mediates the import of antifolate drug methotrexate. 5-amino-4-imidazolecarboxamide riboside (AICAR), when phosphorylated to AICAR monophosphate, can serve as an organic anion for antiporter activity. This chain is Reduced folate transporter, found in Homo sapiens (Human).